The following is a 68-amino-acid chain: Protein transport protein Sec61 gamma-1 subunit (68 aa).

The Cytoplasmic segment spans residues Met1–Glu32. A helical transmembrane segment spans residues Phe33 to Ile61. Over Asn62–Ser68 the chain is Extracellular.

This sequence belongs to the SecE/SEC61-gamma family. In terms of assembly, heterotrimeric complex composed of SEC61-alpha, SEC61-beta and SEC61-gamma.

The protein localises to the endoplasmic reticulum membrane. Its function is as follows. Necessary for protein translocation in the endoplasmic reticulum. The polypeptide is Protein transport protein Sec61 gamma-1 subunit (SEC61G1) (Drosophila melanogaster (Fruit fly)).